Here is an 899-residue protein sequence, read N- to C-terminus: Valine--tRNA ligase (899 aa).

The 'HIGH' region signature appears at 60-70 (PNVTGVLHMGH). The 'KMSKS' region motif lies at 539–543 (KMSKS). Residue K542 participates in ATP binding. Positions 827–898 (AGLIDLDEEQ…KQGLEKLAAL (72 aa)) form a coiled coil.

This sequence belongs to the class-I aminoacyl-tRNA synthetase family. ValS type 1 subfamily. In terms of assembly, monomer.

It is found in the cytoplasm. The catalysed reaction is tRNA(Val) + L-valine + ATP = L-valyl-tRNA(Val) + AMP + diphosphate. In terms of biological role, catalyzes the attachment of valine to tRNA(Val). As ValRS can inadvertently accommodate and process structurally similar amino acids such as threonine, to avoid such errors, it has a 'posttransfer' editing activity that hydrolyzes mischarged Thr-tRNA(Val) in a tRNA-dependent manner. The chain is Valine--tRNA ligase from Syntrophotalea carbinolica (strain DSM 2380 / NBRC 103641 / GraBd1) (Pelobacter carbinolicus).